The chain runs to 495 residues: Prenylcysteine oxidase 1-like (495 aa).

The N-terminal stretch at 1–22 (MARAAPLLAVLATVLTTAAAGG) is a signal peptide. N-linked (GlcNAc...) asparagine glycosylation is found at Asn185 and Asn343.

The protein belongs to the prenylcysteine oxidase family. FAD is required as a cofactor.

It is found in the secreted. In terms of biological role, likely to have oxidoreductase activity. Required in the mevalonate pathway to regulate prenylation and enhances the bactericidal activity of neutrophils. This chain is Prenylcysteine oxidase 1-like (Pcyox1l), found in Mus musculus (Mouse).